The chain runs to 137 residues: Protein LTO1 homolog (137 aa).

Position 2 is an N-acetylalanine (A2). The interval 22-58 is deca-GX3 motif; required for interaction with YAE1 and the CIA complex; the sequence is GYQEGYEEGSSLGIVEGKRYGMVHGAKIGSEIGCYRG.

The protein belongs to the LTO1 family. Forms a complex with YAE1. Interacts with PYCR1 and PYCR2.

The protein resides in the nucleus. The complex LTO1:YAE1 functions as a target specific adapter that probably recruits apo-ABCE1 to the cytosolic iron-sulfur protein assembly (CIA) complex machinery. May be required for biogenesis of the large ribosomal subunit and initiation of translation. May play a role in the regulation of proline metabolism and ROS production. The sequence is that of Protein LTO1 homolog from Mus musculus (Mouse).